Consider the following 202-residue polypeptide: Transmembrane protein 223 (202 aa).

The Mitochondrial matrix portion of the chain corresponds to 1 to 43 (MAAPGRRWSVLLFRALQSLSARRALHDTAPPRDVLLFEHERGR). A helical transmembrane segment spans residues 44–64 (FFAVLGLFCAGQGVFWASLAI). Topologically, residues 65–97 (ASLARPPTPVRPTDAKTPDHGGLDLRSTLWRYG) are mitochondrial intermembrane. The helical transmembrane segment at 98–118 (LAVGCGAIGSLVLGAGLLFSL) threads the bilayer. Residues 119 to 202 (RSVRSVMLRA…DNTVGAYRSL (84 aa)) are Mitochondrial matrix-facing.

The protein belongs to the TMEM223 family. Associates with the mitochondrial ribosome.

The protein localises to the mitochondrion inner membrane. Functionally, mitochondrial ribosome-associated protein involved in the first steps of cytochrome c oxidase complex (complex IV) biogenesis. Stimulates the translation of MT-CO1 mRNA and is a constituent of early MT-CO1 assembly intermediates. This is Transmembrane protein 223 from Bos taurus (Bovine).